The following is a 368-amino-acid chain: L-lactate oxidase (368 aa).

The region spanning 13 to 368 is the FMN hydroxy acid dehydrogenase domain; it reads VNAIDVLDLA…KQMKVKTTFA (356 aa). Pyruvate is bound at residue Tyr-39. FMN is bound by residues 92–94, Ser-121, and Gln-143; that span reads PIA. Residue Tyr-145 participates in pyruvate binding. Thr-171 is an FMN binding site. A pyruvate-binding site is contributed by Arg-180. Residues Lys-239 and Ser-261 each coordinate FMN. The pyruvate site is built by His-263 and Arg-266. His-263 (proton acceptor) is an active-site residue. FMN-binding positions include 294–298 and Arg-318; that span reads DGGVQ.

It belongs to the FMN-dependent alpha-hydroxy acid dehydrogenase family. In terms of assembly, homotetramer. It depends on FMN as a cofactor.

It catalyses the reaction (S)-lactate + O2 = pyruvate + H2O2. The catalysed reaction is 2-hydroxyoctanoate + O2 = 2-oxooctanoate + H2O2. Functionally, catalyzes the oxidation of (S)-lactate (L-lactate) to pyruvate, with a reduction of O2 to H2O2. To a lesser extent is also able to use 2-hydroxyoctanoate as substrate. May be involved in the utilization of L-lactate as an energy source for growth. The protein is L-lactate oxidase of Lacticaseibacillus rhamnosus (strain LMS2-1).